The sequence spans 589 residues: 3-hydroxy-3-methylglutaryl coenzyme A reductase 2-B (589 aa).

Over 1–35 (MDVRRRPVTKTLTAGEPLKSQNQHSSSLKASDALP) the chain is Lumenal. Residues 36–56 (LPLYLTNGLFFTMFFSVMYFL) form a helical membrane-spanning segment. The Cytoplasmic portion of the chain corresponds to 57 to 79 (LHRWREKIRNSVPLHVVTLSELA). The chain crosses the membrane as a helical span at residues 80 to 100 (ALVLLVASVIYLLGFFGIGFV). Topologically, residues 101–544 (QSLIRPSPDS…SKESPGPNSR (444 aa)) are lumenal. N-linked (GlcNAc...) asparagine glycosylation occurs at Asn256. Glu268 (charge relay system) is an active-site residue. The N-linked (GlcNAc...) asparagine glycan is linked to Asn332. Active-site charge relay system residues include Lys400 and Asp476. Residues 545-565 (LLASIVAGSVLAGELSLMSAL) form a helical membrane-spanning segment. The Cytoplasmic portion of the chain corresponds to 566-589 (AAGQLVKSHMKFNRSSKDVSKLSS). His574 functions as the Proton donor in the catalytic mechanism.

Belongs to the HMG-CoA reductase family.

It localises to the endoplasmic reticulum membrane. It catalyses the reaction (R)-mevalonate + 2 NADP(+) + CoA = (3S)-3-hydroxy-3-methylglutaryl-CoA + 2 NADPH + 2 H(+). It participates in metabolic intermediate biosynthesis; (R)-mevalonate biosynthesis; (R)-mevalonate from acetyl-CoA: step 3/3. In terms of biological role, catalyzes the synthesis of mevalonate, the specific precursor of all isoprenoid compounds present in plants. Component of the triterpene saponins (e.g. ginsenosides or panaxosides) and phytosterols biosynthetic pathways. Promotes triterpenes accumulation in roots. This is 3-hydroxy-3-methylglutaryl coenzyme A reductase 2-B from Panax ginseng (Korean ginseng).